We begin with the raw amino-acid sequence, 857 residues long: Bifunctional levopimaradiene synthase, chloroplastic (857 aa).

Residues 1 to 33 constitute a chloroplast transit peptide; the sequence is MALPSSSLSSQIHTGATTQCIPHFHGSLNAGTS. A substrate-binding site is contributed by Lys257. Mg(2+)-binding residues include Asp390 and Asp392. Residues 390 to 393 carry the DXDD motif motif; that stretch reads DIDD. Lys477 contacts substrate. Residues Asp609, Asp613, Asn753, Thr757, and Glu761 each contribute to the Mg(2+) site. A DDXXD motif motif is present at residues 609-613; it reads DDLYD.

The protein belongs to the terpene synthase family. Tpsd subfamily. Mg(2+) serves as cofactor.

The protein localises to the plastid. Its subcellular location is the chloroplast. The catalysed reaction is (2E,6E,10E)-geranylgeranyl diphosphate = (+)-copalyl diphosphate. The enzyme catalyses (+)-copalyl diphosphate = abieta-7,13-diene + diphosphate. It catalyses the reaction (+)-copalyl diphosphate = abieta-8(14),12-diene + diphosphate. It carries out the reaction (+)-copalyl diphosphate = neoabietadiene + diphosphate. Its pathway is terpene metabolism; oleoresin biosynthesis. Involved in defensive oleoresin formation in conifers in response to insect attack or other injury. Involved in diterpene (C20) olefins biosynthesis. Bifunctional enzyme that catalyzes two sequential cyclizations of geranylgeranyl diphosphate (GGPP) to levopimaradiene. Levopimaradiene is the major products of the enzyme with abietadiene and neoabietadiene. No activity with farnesyl diphosphate (FPP) as substrate. The polypeptide is Bifunctional levopimaradiene synthase, chloroplastic (Pinus contorta (Shore pine)).